Here is a 412-residue protein sequence, read N- to C-terminus: Short-chain specific acyl-CoA dehydrogenase, mitochondrial (412 aa).

Residues 1 to 24 (MAAALLARAGGSLGRALRARDWRR) constitute a mitochondrion transit peptide. T27 carries the phosphothreonine modification. K51 carries the N6-acetyllysine; alternate modification. K51 is subject to N6-succinyllysine; alternate. K72 bears the N6-acetyllysine mark. N6-acetyllysine; alternate is present on K129. K129 bears the N6-succinyllysine; alternate mark. FAD is bound by residues 152 to 161 (FALSEPGNGS) and 185 to 187 (WIT). S161 provides a ligand contact to substrate. Residue K208 is modified to N6-acetyllysine. The residue at position 262 (K262) is an N6-acetyllysine; alternate. K262 is subject to N6-succinyllysine; alternate. 269–272 (DMGR) contacts substrate. K292 is modified (N6-acetyllysine). FAD is bound at residue R297. K306 is modified (N6-acetyllysine; alternate). K306 carries the N6-succinyllysine; alternate modification. 365-369 (QILGG) provides a ligand contact to FAD. E392 acts as the Proton acceptor in catalysis. Position 394-396 (394-396 (TSE)) interacts with FAD.

This sequence belongs to the acyl-CoA dehydrogenase family. As to quaternary structure, homotetramer. Requires FAD as cofactor.

It is found in the mitochondrion matrix. It catalyses the reaction a short-chain 2,3-saturated fatty acyl-CoA + oxidized [electron-transfer flavoprotein] + H(+) = a short-chain (2E)-enoyl-CoA + reduced [electron-transfer flavoprotein]. The catalysed reaction is butanoyl-CoA + oxidized [electron-transfer flavoprotein] + H(+) = (2E)-butenoyl-CoA + reduced [electron-transfer flavoprotein]. The enzyme catalyses pentanoyl-CoA + oxidized [electron-transfer flavoprotein] + H(+) = (2E)-pentenoyl-CoA + reduced [electron-transfer flavoprotein]. It carries out the reaction hexanoyl-CoA + oxidized [electron-transfer flavoprotein] + H(+) = (2E)-hexenoyl-CoA + reduced [electron-transfer flavoprotein]. It functions in the pathway lipid metabolism; mitochondrial fatty acid beta-oxidation. Its function is as follows. Short-chain specific acyl-CoA dehydrogenase is one of the acyl-CoA dehydrogenases that catalyze the first step of mitochondrial fatty acid beta-oxidation, an aerobic process breaking down fatty acids into acetyl-CoA and allowing the production of energy from fats. The first step of fatty acid beta-oxidation consists in the removal of one hydrogen from C-2 and C-3 of the straight-chain fatty acyl-CoA thioester, resulting in the formation of trans-2-enoyl-CoA. Among the different mitochondrial acyl-CoA dehydrogenases, short-chain specific acyl-CoA dehydrogenase acts specifically on acyl-CoAs with saturated 4 to 6 carbons long primary chains. This is Short-chain specific acyl-CoA dehydrogenase, mitochondrial (Acads) from Rattus norvegicus (Rat).